Consider the following 443-residue polypeptide: 5-methylthioadenosine/S-adenosylhomocysteine deaminase (443 aa).

The Zn(2+) site is built by His-74 and His-76. Substrate-binding residues include Glu-103 and His-196. His-223 provides a ligand contact to Zn(2+). 2 residues coordinate substrate: Glu-226 and Asp-311. A Zn(2+)-binding site is contributed by Asp-311.

This sequence belongs to the metallo-dependent hydrolases superfamily. MTA/SAH deaminase family. It depends on Zn(2+) as a cofactor.

It carries out the reaction S-adenosyl-L-homocysteine + H2O + H(+) = S-inosyl-L-homocysteine + NH4(+). The enzyme catalyses S-methyl-5'-thioadenosine + H2O + H(+) = S-methyl-5'-thioinosine + NH4(+). In terms of biological role, catalyzes the deamination of 5-methylthioadenosine and S-adenosyl-L-homocysteine into 5-methylthioinosine and S-inosyl-L-homocysteine, respectively. Is also able to deaminate adenosine. This Haloquadratum walsbyi (strain DSM 16790 / HBSQ001) protein is 5-methylthioadenosine/S-adenosylhomocysteine deaminase.